The sequence spans 412 residues: Multifunctional CCA protein (412 aa).

Residues Gly-8 and Arg-11 each coordinate ATP. CTP contacts are provided by Gly-8 and Arg-11. Residues Asp-21 and Asp-23 each contribute to the Mg(2+) site. ATP is bound by residues Arg-91, Arg-137, and Arg-140. Arg-91, Arg-137, and Arg-140 together coordinate CTP. The HD domain maps to 225–326 (TGIHVMMVID…ADMLQATDAY (102 aa)).

It belongs to the tRNA nucleotidyltransferase/poly(A) polymerase family. Bacterial CCA-adding enzyme type 1 subfamily. As to quaternary structure, monomer. Can also form homodimers and oligomers. The cofactor is Mg(2+). Requires Ni(2+) as cofactor.

The catalysed reaction is a tRNA precursor + 2 CTP + ATP = a tRNA with a 3' CCA end + 3 diphosphate. It carries out the reaction a tRNA with a 3' CCA end + 2 CTP + ATP = a tRNA with a 3' CCACCA end + 3 diphosphate. Functionally, catalyzes the addition and repair of the essential 3'-terminal CCA sequence in tRNAs without using a nucleic acid template. Adds these three nucleotides in the order of C, C, and A to the tRNA nucleotide-73, using CTP and ATP as substrates and producing inorganic pyrophosphate. tRNA 3'-terminal CCA addition is required both for tRNA processing and repair. Also involved in tRNA surveillance by mediating tandem CCA addition to generate a CCACCA at the 3' terminus of unstable tRNAs. While stable tRNAs receive only 3'-terminal CCA, unstable tRNAs are marked with CCACCA and rapidly degraded. The polypeptide is Multifunctional CCA protein (Nitrosomonas eutropha (strain DSM 101675 / C91 / Nm57)).